A 271-amino-acid chain; its full sequence is CAAX prenyl protease 2 (271 aa).

At 1 to 9 (MISSYKYNP) the chain is on the extracellular side. Residues 10 to 30 (KLYFLSTFVVTYILWFTGAYL) traverse the membrane as a helical segment. Residues 31–38 (SFSSTYSG) are Cytoplasmic-facing. Residues 39–59 (IYMLIMLPGLMAPFIISTILI) traverse the membrane as a helical segment. Residues 60 to 82 (AKSKNNELKKDFINRLFNLKLIN) lie on the Extracellular side of the membrane. A helical transmembrane segment spans residues 83-105 (LKTIPVVFLLMPAVILLSILLSI). Residues 106-125 (PFGGSISQFQFSGGFSFSTD) are Cytoplasmic-facing. A helical membrane pass occupies residues 126 to 149 (FVPVLFLLLLAATFEELGWRGYAF). E140 serves as the catalytic Proton donor/acceptor. Residues 150–159 (DSLQSRYSLF) lie on the Extracellular side of the membrane. Residues 160–179 (KASILFGIFWSLWHFPLIFV) form a helical membrane-spanning segment. The active-site Proton donor/acceptor is H173. Topologically, residues 180–192 (NNSYQYEIFNQSI) are cytoplasmic. The helical transmembrane segment at 193 to 213 (WYGLNFFLSILPMGIIITWMC) threads the bilayer. Residues 214–219 (LKNRKS) are Extracellular-facing. Residues 220 to 237 (IILAIIFHFLINLNQELL) form a helical membrane-spanning segment. At 238–243 (AITQDT) the chain is on the cytoplasmic side. Residues 244–263 (KIIETGVLFLVAAAIILYDK) form a helical membrane-spanning segment. The Extracellular segment spans residues 264–271 (KMFFEKLG).

The protein belongs to the peptidase U48 family.

It is found in the cell membrane. The enzyme catalyses Hydrolyzes the peptide bond -P2-(S-farnesyl or geranylgeranyl)C-P1'-P2'-P3'-COOH where P1' and P2' are amino acids with aliphatic sidechains and P3' is any C-terminal residue.. Its activity is regulated as follows. Activity is unaffected by metalloprotease inhibitors 5 mM EDTA and 5 mM Zn(2+). Activity partially inhibited by 1,10-phenanthroline and 1,7-phenanthroline. Functionally, protease involved in the processing of a variety of prenylated proteins containing the C-terminal CAAX motif, where C is a cysteine modified with an isoprenoid lipid, A is an aliphatic amino acid and X is any C-terminal amino acid. Proteolytically removes the C-terminal three residues of farnesylated proteins, leaving the prenylated cysteine as the new C-terminus. Hydrolysis depends on a farnesylated cysteine residue and no activity is shown towards geranylgeranylated peptides. In Methanococcus maripaludis (strain DSM 14266 / JCM 13030 / NBRC 101832 / S2 / LL), this protein is CAAX prenyl protease 2.